Here is a 439-residue protein sequence, read N- to C-terminus: Glucose-1-phosphate adenylyltransferase (439 aa).

Residues Gly-172, 187 to 188, and Ser-219 contribute to the alpha-D-glucose 1-phosphate site; that span reads EK.

Belongs to the bacterial/plant glucose-1-phosphate adenylyltransferase family. In terms of assembly, homotetramer.

It carries out the reaction alpha-D-glucose 1-phosphate + ATP + H(+) = ADP-alpha-D-glucose + diphosphate. Its pathway is glycan biosynthesis; glycogen biosynthesis. Its function is as follows. Involved in the biosynthesis of ADP-glucose, a building block required for the elongation reactions to produce glycogen. Catalyzes the reaction between ATP and alpha-D-glucose 1-phosphate (G1P) to produce pyrophosphate and ADP-Glc. In Synechocystis sp. (strain ATCC 27184 / PCC 6803 / Kazusa), this protein is Glucose-1-phosphate adenylyltransferase.